A 33-amino-acid chain; its full sequence is Photosystem II reaction center protein Psb30 (33 aa).

A helical transmembrane segment spans residues 5-25 (VLAQLTVLTLIVISGPLVIAL).

The protein belongs to the Psb30/Ycf12 family. As to quaternary structure, PSII is composed of 1 copy each of membrane proteins PsbA, PsbB, PsbC, PsbD, PsbE, PsbF, PsbH, PsbI, PsbJ, PsbK, PsbL, PsbM, PsbT, PsbX, PsbY, PsbZ, Psb30/Ycf12, peripheral proteins of the oxygen-evolving complex and a large number of cofactors. It forms dimeric complexes.

The protein localises to the plastid. It is found in the chloroplast thylakoid membrane. Functionally, a core subunit of photosystem II (PSII), probably helps stabilize the reaction center. In Cycas taitungensis (Prince sago), this protein is Photosystem II reaction center protein Psb30.